The sequence spans 536 residues: Protein Rep68 (536 aa).

In terms of domain architecture, PV NS1-Nuc spans 1–199 (MPGFYEIVIK…AQHLTHVSQT (199 aa)). A divalent metal cation contacts are provided by E83, H90, and H92. The RCR-2 signature appears at 90–92 (HMH). Y156 functions as the For nuclease activity in the catalytic mechanism. Positions 156–160 (YLLPK) match the RCR-3 motif. Over residues 196–211 (VSQTQEQNKENQNPNS) the composition is skewed to polar residues. A disordered region spans residues 196 to 216 (VSQTQEQNKENQNPNSDAPVI). Residues 308–463 (DPQYAASVFL…LDHDFGKVTK (156 aa)) form the SF3 helicase domain. 334-341 (GPATTGKT) serves as a coordination point for ATP. The segment at 488–536 (KGGAKKRPAPSDADISEPKRVRESVAQPSTSDAEASINYADRLARGHSL) is disordered.

As to quaternary structure, interacts with host TOPORS. Interacts with host KCTD5. Requires a divalent metal cation as cofactor.

The protein localises to the host nucleus. It carries out the reaction ATP + H2O = ADP + phosphate + H(+). Its function is as follows. Plays an essential role in the initiation of viral DNA synthesis. Binds specifically to an inverted terminal repeat element (ITR) on the 3' and 5' ends of the viral DNA, where it cleaves a site specifically to generate a priming site for initiation of the synthesis of a complementary strand. Also plays a role as transcriptional regulator, DNA helicase and as key factor in site-specific integration of the viral genome. Inhibits the host cell cycle G1/S and G2/M transitions. These arrests may provide essential cellular factors for viral DNA replication. The sequence is that of Protein Rep68 (Rep68) from Mammalia (AAV-2).